The following is a 323-amino-acid chain: GTP 3',8-cyclase (323 aa).

Positions K4 to E233 constitute a Radical SAM core domain. Position 13 (R13) interacts with GTP. C20 and C24 together coordinate [4Fe-4S] cluster. Residue Y26 coordinates S-adenosyl-L-methionine. Position 27 (C27) interacts with [4Fe-4S] cluster. R63 is a GTP binding site. Position 67 (G67) interacts with S-adenosyl-L-methionine. Residue T94 participates in GTP binding. S118 is a binding site for S-adenosyl-L-methionine. K154 contributes to the GTP binding site. M188 provides a ligand contact to S-adenosyl-L-methionine. [4Fe-4S] cluster contacts are provided by C250 and C253. R255–R257 is a binding site for GTP. C267 is a [4Fe-4S] cluster binding site.

The protein belongs to the radical SAM superfamily. MoaA family. In terms of assembly, monomer and homodimer. Requires [4Fe-4S] cluster as cofactor.

It carries out the reaction GTP + AH2 + S-adenosyl-L-methionine = (8S)-3',8-cyclo-7,8-dihydroguanosine 5'-triphosphate + 5'-deoxyadenosine + L-methionine + A + H(+). It participates in cofactor biosynthesis; molybdopterin biosynthesis. Its function is as follows. Catalyzes the cyclization of GTP to (8S)-3',8-cyclo-7,8-dihydroguanosine 5'-triphosphate. The polypeptide is GTP 3',8-cyclase (Clostridium perfringens (strain 13 / Type A)).